The chain runs to 103 residues: Small ribosomal subunit protein uS10 (103 aa).

This sequence belongs to the universal ribosomal protein uS10 family. As to quaternary structure, part of the 30S ribosomal subunit.

Involved in the binding of tRNA to the ribosomes. This Acetivibrio thermocellus (strain ATCC 27405 / DSM 1237 / JCM 9322 / NBRC 103400 / NCIMB 10682 / NRRL B-4536 / VPI 7372) (Clostridium thermocellum) protein is Small ribosomal subunit protein uS10.